The primary structure comprises 318 residues: Ornithine carbamoyltransferase (318 aa).

Residues 63 to 66, Gln90, Arg114, and 141 to 144 each bind carbamoyl phosphate; these read STRT and HPCQ. L-ornithine is bound by residues Asn172, Asp235, and 239–240; that span reads SM. Residues 275 to 276 and Arg303 each bind carbamoyl phosphate; that span reads CL.

The protein belongs to the aspartate/ornithine carbamoyltransferase superfamily. OTCase family.

It localises to the cytoplasm. It catalyses the reaction carbamoyl phosphate + L-ornithine = L-citrulline + phosphate + H(+). It functions in the pathway amino-acid biosynthesis; L-arginine biosynthesis; L-arginine from L-ornithine and carbamoyl phosphate: step 1/3. In terms of biological role, reversibly catalyzes the transfer of the carbamoyl group from carbamoyl phosphate (CP) to the N(epsilon) atom of ornithine (ORN) to produce L-citrulline. The protein is Ornithine carbamoyltransferase of Prochlorococcus marinus (strain SARG / CCMP1375 / SS120).